Here is a 269-residue protein sequence, read N- to C-terminus: 4-hydroxy-tetrahydrodipicolinate reductase (269 aa).

NAD(+) is bound by residues 10–15, E36, 99–101, and 123–126; these read GANGRM, GTT, and AANF. The active-site Proton donor/acceptor is H156. H157 provides a ligand contact to (S)-2,3,4,5-tetrahydrodipicolinate. The active-site Proton donor is the K160. 166-167 provides a ligand contact to (S)-2,3,4,5-tetrahydrodipicolinate; that stretch reads GT.

It belongs to the DapB family.

The protein localises to the cytoplasm. It carries out the reaction (S)-2,3,4,5-tetrahydrodipicolinate + NAD(+) + H2O = (2S,4S)-4-hydroxy-2,3,4,5-tetrahydrodipicolinate + NADH + H(+). The enzyme catalyses (S)-2,3,4,5-tetrahydrodipicolinate + NADP(+) + H2O = (2S,4S)-4-hydroxy-2,3,4,5-tetrahydrodipicolinate + NADPH + H(+). It functions in the pathway amino-acid biosynthesis; L-lysine biosynthesis via DAP pathway; (S)-tetrahydrodipicolinate from L-aspartate: step 4/4. Functionally, catalyzes the conversion of 4-hydroxy-tetrahydrodipicolinate (HTPA) to tetrahydrodipicolinate. This Neisseria meningitidis serogroup C (strain 053442) protein is 4-hydroxy-tetrahydrodipicolinate reductase.